A 234-amino-acid chain; its full sequence is Leucyl/phenylalanyl-tRNA--protein transferase (234 aa).

Belongs to the L/F-transferase family.

The protein resides in the cytoplasm. It carries out the reaction N-terminal L-lysyl-[protein] + L-leucyl-tRNA(Leu) = N-terminal L-leucyl-L-lysyl-[protein] + tRNA(Leu) + H(+). The catalysed reaction is N-terminal L-arginyl-[protein] + L-leucyl-tRNA(Leu) = N-terminal L-leucyl-L-arginyl-[protein] + tRNA(Leu) + H(+). The enzyme catalyses L-phenylalanyl-tRNA(Phe) + an N-terminal L-alpha-aminoacyl-[protein] = an N-terminal L-phenylalanyl-L-alpha-aminoacyl-[protein] + tRNA(Phe). Functions in the N-end rule pathway of protein degradation where it conjugates Leu, Phe and, less efficiently, Met from aminoacyl-tRNAs to the N-termini of proteins containing an N-terminal arginine or lysine. This Salmonella agona (strain SL483) protein is Leucyl/phenylalanyl-tRNA--protein transferase.